The following is a 785-amino-acid chain: Transcription factor Sp1 (785 aa).

The disordered stretch occupies residues 1–93 (MSDQDHSMDE…PSQSGGTGEL (93 aa)). N-acetylserine is present on Ser-2. A phosphoserine mark is found at Ser-2 and Ser-7. The interval 2 to 82 (SDQDHSMDEM…SPNENSNNSQ (81 aa)) is repressor domain. A Glycyl lysine isopeptide (Lys-Gly) (interchain with G-Cter in SUMO); alternate cross-link involves residue Lys-16. A Glycyl lysine isopeptide (Lys-Gly) (interchain with G-Cter in SUMO2); alternate cross-link involves residue Lys-16. Positions 20 to 34 (GVGGNNGGNGNGGGA) are enriched in gly residues. Ser-59 is subject to Phosphoserine. Residues 72–85 (ESPNENSNNSQGPS) are compositionally biased toward low complexity. Ser-101 carries the phosphoserine; by ATM modification. Positions 109–123 (IISSSSGATPTSKEQ) are enriched in polar residues. The tract at residues 109-141 (IISSSSGATPTSKEQSGSSTNGSNGSESSKNRT) is disordered. The span at 124 to 136 (SGSSTNGSNGSES) shows a compositional bias: low complexity. A transactivation domain A (Gln-rich) region spans residues 146–251 (QYVVAAAPNL…ANNVLSGQTQ (106 aa)). Residues 261 to 495 (NGNITLLPVN…PMQGVSLGQT (235 aa)) form a transactivation domain B (Gln-rich) region. The residue at position 278 (Thr-278) is a Phosphothreonine; by MAPK8. The tract at residues 329–395 (TTTTTSNMGI…KEGEQNQQTQ (67 aa)) is disordered. Positions 342–357 (TTSGSSGTNSQGQTPQ) are enriched in low complexity. Residues 358–379 (RVSGLQGSDALNIQQNQTSGGS) show a composition bias toward polar residues. Residues 381–395 (QAGQQKEGEQNQQTQ) are compositionally biased toward low complexity. Thr-453 carries the phosphothreonine; by MAPK1 and MAPK3 modification. Residues 462-470 (VSWQTLQLQ) carry the 9aaTAD motif. Ser-491 is a glycosylation site (O-linked (GlcNAc) serine). The transactivation domain C (highly charged) stretch occupies residues 496 to 610 (SSSNTTLTPI…REACTCPYCK (115 aa)). Positions 567–598 (LHGAGGDGIHDDTAGGEEGENSPDAQPQAGRR) are disordered. At Ser-612 the chain carries Phosphoserine; alternate. Ser-612 carries an O-linked (GlcNAc) serine; alternate glycan. Residues 619–785 (DPGKKKQHIC…QSINISGNGF (167 aa)) form a VZV IE62-binding region. The C2H2-type 1 zinc finger occupies 626–650 (HICHIQGCGKVYGKTSHLRAHLRWH). At Thr-640 the chain carries Phosphothreonine; alternate. An O-linked (GlcNAc) threonine; alternate glycan is attached at Thr-640. An O-linked (GlcNAc) serine; alternate glycan is attached at Ser-641. Ser-641 is modified (phosphoserine; by PKC/PRKCZ; alternate). Phosphothreonine; by PKC/PRKCZ is present on Thr-651. Residues 656 to 680 (FMCTWSYCGKRFTRSDELQRHKRTH) form a C2H2-type 2 zinc finger. Position 668 is a phosphothreonine (Thr-668). At Ser-670 the chain carries Phosphoserine; by PKC/PRKCZ. Thr-681 carries the post-translational modification Phosphothreonine; by PKC/PRKCZ. Residues 686–708 (FACPECPKRFMRSDHLSKHIKTH) form a C2H2-type 3 zinc finger. A phosphoserine; alternate mark is found at Ser-698 and Ser-702. O-linked (GlcNAc) serine; alternate glycans are attached at residues Ser-698 and Ser-702. The residue at position 703 (Lys-703) is an N6-acetyllysine. Positions 708-785 (HQNKKGGPGV…QSINISGNGF (78 aa)) are domain D. Position 739 is a phosphothreonine; by MAPK1, MAPK3 and MAPK8 (Thr-739).

Belongs to the Sp1 C2H2-type zinc-finger protein family. In terms of assembly, interacts with ATF7IP, ATF7IP2, BAHD1, POGZ, HCFC1, AATF and PHC2. Interacts with HLTF; the interaction may be required for basal transcriptional activity of HLTF. Interacts (deacetylated form) with EP300; the interaction enhances gene expression. Interacts with HDAC1 and JUN. Interacts with ELF1; the interaction is inhibited by glycosylation of SP1. Interaction with NFYA; the interaction is inhibited by glycosylation of SP1. Interacts with ATF7IP and TBP. Interacts with MEIS2 isoform 4 and PBX1 isoform PBX1a. Interacts with EGR1. Interacts with SMARCA4/BRG1. Interacts with RNF112 in an oxidative stress-regulated manner. Interacts with ZBTB7A; ZBTB7A prevents the binding to GC-rich motifs in promoters and represses the transcriptional activity of SP1. Interacts with DDX3X; this interaction potentiates SP1-induced CDKN1A/WAF1/CIP1 transcription. Interacts with MSX1; the interaction may inhibit MSX1 autoinactivation. (Microbial infection) Interacts with varicella-zoster virus IE62 protein. As to quaternary structure, (Microbial infection) Interacts with SV40 VP2/3 proteins. Interacts with SV40 major capsid protein VP1; this interaction leads to a cooperativity between the 2 proteins in DNA binding. In terms of assembly, (Microbial infection) Interacts with HIV-1 Vpr; the interaction is inhibited by SP1 O-glycosylation. Phosphorylated on multiple serine and threonine residues. Phosphorylation is coupled to ubiquitination, sumoylation and proteolytic processing. Phosphorylation on Ser-59 enhances proteolytic cleavage. Phosphorylation on Ser-7 enhances ubiquitination and protein degradation. Hyperphosphorylation on Ser-101 in response to DNA damage has no effect on transcriptional activity. MAPK1/MAPK3-mediated phosphorylation on Thr-453 and Thr-739 enhances VEGF transcription but, represses FGF2-triggered PDGFR-alpha transcription. Also implicated in the repression of RECK by ERBB2. Hyperphosphorylated on Thr-278 and Thr-739 during mitosis by MAPK8 shielding SP1 from degradation by the ubiquitin-dependent pathway. Phosphorylated in the zinc-finger domain by calmodulin-activated PKCzeta. Phosphorylation on Ser-641 by PKCzeta is critical for TSA-activated LHR gene expression through release of its repressor, p107. Phosphorylation on Thr-668, Ser-670 and Thr-681 is stimulated by angiotensin II via the AT1 receptor inducing increased binding to the PDGF-D promoter. This phosphorylation is increased in injured artey wall. Ser-59 and Thr-681 can both be dephosphorylated by PP2A during cell-cycle interphase. Dephosphorylation on Ser-59 leads to increased chromatin association during interphase and increases the transcriptional activity. On insulin stimulation, sequentially glycosylated and phosphorylated on several C-terminal serine and threonine residues. Post-translationally, acetylated. Acetylation/deacetylation events affect transcriptional activity. Deacetylation leads to an increase in the expression of the 12(s)-lipooxygenase gene through recruitment of p300 to the promoter. Deacetylated by HDAC6 which leads to increased expression of ENG and positive regulation of angiogenesis. In terms of processing, ubiquitinated. Ubiquitination occurs on the C-terminal proteolytically-cleaved peptide and is triggered by phosphorylation. Sumoylated with SUMO1. Sumoylation modulates proteolytic cleavage of the N-terminal repressor domain. Sumoylation levels are attenuated during tumorigenesis. Phosphorylation mediates SP1 desumoylation. Post-translationally, proteolytic cleavage in the N-terminal repressor domain is prevented by sumoylation. The C-terminal cleaved product is susceptible to degradation. In terms of processing, O-glycosylated; Contains 8 N-acetylglucosamine side chains. Levels are controlled by insulin and the SP1 phosphorylation states. Insulin-mediated O-glycosylation locates SP1 to the nucleus, where it is sequentially deglycosylated and phosphorylated. O-glycosylation affects transcriptional activity through disrupting the interaction with a number of transcription factors including ELF1 and NFYA. Also inhibits interaction with the HIV1 promoter. Inhibited by peroxisomome proliferator receptor gamma (PPARgamma). In terms of tissue distribution, up-regulated in adenocarcinomas of the stomach (at protein level). Isoform 3 is ubiquitously expressed at low levels.

It localises to the nucleus. It is found in the cytoplasm. Its function is as follows. Transcription factor that can activate or repress transcription in response to physiological and pathological stimuli. Binds with high affinity to GC-rich motifs and regulates the expression of a large number of genes involved in a variety of processes such as cell growth, apoptosis, differentiation and immune responses. Highly regulated by post-translational modifications (phosphorylations, sumoylation, proteolytic cleavage, glycosylation and acetylation). Also binds the PDGFR-alpha G-box promoter. May have a role in modulating the cellular response to DNA damage. Implicated in chromatin remodeling. Plays an essential role in the regulation of FE65 gene expression. In complex with ATF7IP, maintains telomerase activity in cancer cells by inducing TERT and TERC gene expression. Isoform 3 is a stronger activator of transcription than isoform 1. Positively regulates the transcription of the core clock component BMAL1. Plays a role in the recruitment of SMARCA4/BRG1 on the c-FOS promoter. Plays a role in protecting cells against oxidative stress following brain injury by regulating the expression of RNF112. This is Transcription factor Sp1 (SP1) from Homo sapiens (Human).